Consider the following 64-residue polypeptide: Basic secretory protease (64 aa).

The cofactor is a divalent metal cation. In terms of processing, glycosylated.

With respect to regulation, inhibited by EDTA. In terms of biological role, metalloprotease, digests gelatin and azocasein (in vitro). The protein is Basic secretory protease of Boswellia serrata (Indian frankincense).